The sequence spans 131 residues: Small ribosomal subunit protein uS8 (131 aa).

The protein belongs to the universal ribosomal protein uS8 family. Part of the 30S ribosomal subunit. Contacts proteins S5 and S12.

Functionally, one of the primary rRNA binding proteins, it binds directly to 16S rRNA central domain where it helps coordinate assembly of the platform of the 30S subunit. The chain is Small ribosomal subunit protein uS8 from Desulforudis audaxviator (strain MP104C).